We begin with the raw amino-acid sequence, 269 residues long: Imidazoleglycerol-phosphate dehydratase 3, chloroplastic (269 aa).

A chloroplast-targeting transit peptide spans 1-51; that stretch reads MTTAPVVSPSLSRLHSAPASPFPKAPVGSGAGVAFPARPYGPSLRLRSAVM. Substrate-binding positions include glutamate 83, 109–117, 135–139, arginine 161, and arginine 183; these read HMLDQLASH and HHSNE. Residues histidine 109, histidine 135, histidine 136, and glutamate 139 each contribute to the Mn(2+) site. Mn(2+) contacts are provided by histidine 207, histidine 231, histidine 232, and glutamate 235. Substrate contacts are provided by residues 231–239 and 261–263; these read HHIIEATFK and SSK.

The protein belongs to the imidazoleglycerol-phosphate dehydratase family. Mn(2+) is required as a cofactor.

The protein localises to the plastid. It is found in the chloroplast. It carries out the reaction D-erythro-1-(imidazol-4-yl)glycerol 3-phosphate = 3-(imidazol-4-yl)-2-oxopropyl phosphate + H2O. It functions in the pathway amino-acid biosynthesis; L-histidine biosynthesis; L-histidine from 5-phospho-alpha-D-ribose 1-diphosphate: step 6/9. This is Imidazoleglycerol-phosphate dehydratase 3, chloroplastic from Triticum aestivum (Wheat).